The primary structure comprises 23 residues: Paralytic peptide 1 (23 aa).

Residues Cys7 and Cys19 are joined by a disulfide bond.

The protein belongs to the GBP/PSP1/paralytic peptide family. As to expression, hemolymph.

In terms of biological role, causes rapid, rigid paralysis when injected into Lepidopteran larvae. The physiological role may be to reduce hemolymph loss following injury and promote wound healing. This chain is Paralytic peptide 1, found in Heliothis virescens (Tobacco budworm moth).